We begin with the raw amino-acid sequence, 101 residues long: Apolipoprotein C-II (101 aa).

An N-terminal signal peptide occupies residues 1–22 (MGARHLLALLLVLLVLGFEVQG). Residues 66–74 (TMDEKIRDM) form a lipid binding region. Residues 78-101 (STAAVSTYVGIFTDQLLSLLKGDE) form a lipoprotein lipase cofactor region.

This sequence belongs to the apolipoprotein C2 family. Proapolipoprotein C-II is synthesized as a sialic acid containing glycoprotein which is subsequently desialylated prior to its proteolytic processing. Post-translationally, proapolipoprotein C-II, the major form found in plasma undergoes proteolytic cleavage of its N-terminal hexapeptide to generate apolipoprotein C-II, which occurs as the minor form in plasma.

The protein resides in the secreted. Functionally, component of chylomicrons, very low-density lipoproteins (VLDL), low-density lipoproteins (LDL), and high-density lipoproteins (HDL) in plasma. Plays an important role in lipoprotein metabolism as an activator of lipoprotein lipase. Both proapolipoprotein C-II and apolipoprotein C-II can activate lipoprotein lipase. This chain is Apolipoprotein C-II (APOC2), found in Tapirus indicus (Asiatic tapir).